The chain runs to 154 residues: 6,7-dimethyl-8-ribityllumazine synthase (154 aa).

5-amino-6-(D-ribitylamino)uracil is bound by residues Phe-22, 56 to 58 (AFE), and 80 to 82 (TVI). 85–86 (ST) contributes to the (2S)-2-hydroxy-3-oxobutyl phosphate binding site. His-88 functions as the Proton donor in the catalytic mechanism. Phe-113 contacts 5-amino-6-(D-ribitylamino)uracil. Arg-127 contributes to the (2S)-2-hydroxy-3-oxobutyl phosphate binding site.

Belongs to the DMRL synthase family.

It catalyses the reaction (2S)-2-hydroxy-3-oxobutyl phosphate + 5-amino-6-(D-ribitylamino)uracil = 6,7-dimethyl-8-(1-D-ribityl)lumazine + phosphate + 2 H2O + H(+). The protein operates within cofactor biosynthesis; riboflavin biosynthesis; riboflavin from 2-hydroxy-3-oxobutyl phosphate and 5-amino-6-(D-ribitylamino)uracil: step 1/2. In terms of biological role, catalyzes the formation of 6,7-dimethyl-8-ribityllumazine by condensation of 5-amino-6-(D-ribitylamino)uracil with 3,4-dihydroxy-2-butanone 4-phosphate. This is the penultimate step in the biosynthesis of riboflavin. This is 6,7-dimethyl-8-ribityllumazine synthase from Lactococcus lactis subsp. lactis (strain IL1403) (Streptococcus lactis).